A 285-amino-acid chain; its full sequence is Glutamate racemase (285 aa).

Residues 28-29 (DS) and 60-61 (YG) each bind substrate. Cys-92 acts as the Proton donor/acceptor in catalysis. 93–94 (NT) is a substrate binding site. Cys-204 functions as the Proton donor/acceptor in the catalytic mechanism. Position 205-206 (205-206 (TH)) interacts with substrate.

The protein belongs to the aspartate/glutamate racemases family.

The catalysed reaction is L-glutamate = D-glutamate. It participates in cell wall biogenesis; peptidoglycan biosynthesis. Provides the (R)-glutamate required for cell wall biosynthesis. The polypeptide is Glutamate racemase (Escherichia coli O9:H4 (strain HS)).